The sequence spans 666 residues: DNA ligase (666 aa).

NAD(+) is bound by residues 31-35, 80-81, and Glu111; these read DYDFD and SL. Lys113 serves as the catalytic N6-AMP-lysine intermediate. NAD(+) is bound by residues Arg134, Glu170, Lys285, and Lys309. Zn(2+) contacts are provided by Cys403, Cys406, Cys421, and Cys427. The region spanning 587–666 is the BRCT domain; it reads VVSNKLLGKI…ESDFSALLTS (80 aa).

This sequence belongs to the NAD-dependent DNA ligase family. LigA subfamily. It depends on Mg(2+) as a cofactor. Mn(2+) is required as a cofactor.

It carries out the reaction NAD(+) + (deoxyribonucleotide)n-3'-hydroxyl + 5'-phospho-(deoxyribonucleotide)m = (deoxyribonucleotide)n+m + AMP + beta-nicotinamide D-nucleotide.. Its function is as follows. DNA ligase that catalyzes the formation of phosphodiester linkages between 5'-phosphoryl and 3'-hydroxyl groups in double-stranded DNA using NAD as a coenzyme and as the energy source for the reaction. It is essential for DNA replication and repair of damaged DNA. This is DNA ligase from Flavobacterium psychrophilum (strain ATCC 49511 / DSM 21280 / CIP 103535 / JIP02/86).